We begin with the raw amino-acid sequence, 440 residues long: Tetratricopeptide repeat protein 5 (440 aa).

TPR repeat units lie at residues 7–61, 68–98, 103–130, 136–174, and 179–216; these read EEVK…EEVV, AQVL…AVKL, VEAW…SGAL, KVSL…AVQM, and GRSW…AEKV. A Nuclear export signal motif is present at residues 13–24; the sequence is LQKLQELVDQLY. Position 203 is a phosphoserine; by ATM (Ser203). Ser221 carries the post-translational modification Phosphoserine; by CHEK2. The TPR 6 repeat unit spans residues 224 to 253; the sequence is PDLHLNRATLHKYEENYGEALEGFSRAAAL. The segment at 285–287 is mediates interaction with 28S rRNA of ribosome-coding tubulin; sequence KTK.

As to quaternary structure, interacts with JMY and p300/EP300; the interaction occurs in the nucleus and augments the association between JMY and p300/EP300 in response to DNA damage. Interacts with PRMT5; the interaction is DNA damage-dependent and promotes PRMT5 interaction with p53/TP53 and subsequent methylation. Forms a complex with HSF1 and p300/EP300; these interactions augment chromatin-bound HSF1 and p300/EP300 histone acetyltransferase activity, resulting in enhanced heat-shock-responsive transcription. Interacts with JMY; the interaction occurs in the cytoplasm and results in the inhibition of JYM's nucleation activity. Interacts with ribosome-coding tubulin (via 60S subunit 28S rRNA and protein uL24/RPL26) and the N-terminal of nascent tubulin polypeptide (via alpha-tubulin MREC motif and beta-tubulin MREI motif); these interactions result in tubulin mRNA-targeted degradation. Interacts with ATP5F1B; the interaction occurs in the mitochondria and results in ATP production decrease. Interacts with p53/TP53; the interaction occurs in the mitochondria and results in increased apoptosis. In terms of processing, phosphorylation by ATM kinase induces nuclear accumulation while interfering with nuclear export, and phosphorylation by CHEK2 kinase enhances nuclear stability.

The protein localises to the nucleus. It is found in the cytoplasm. It localises to the cytoplasmic vesicle. The protein resides in the mitochondrion matrix. In terms of biological role, cofactor involved in the regulation of various cellular mechanisms such as actin regulation, autophagy, chromatin regulation and DNA repair. In physiological conditions, interacts with cofactor JMY in the cytoplasm which prevents JMY's actin nucleation activity and ability to activate the Arp2/3 complex. Acts as a negative regulator of nutrient stress-induced autophagy by inhibiting JMY's interaction with MAP1LC3B, thereby preventing autophagosome formation. Involves in tubulin autoregulation by promoting its degradation in response to excess soluble tubulin. To do so, associates with the active ribosome near the ribosome exit tunnel and with nascent tubulin polypeptides early during their translation, triggering tubulin mRNA-targeted degradation. Following DNA damage, phosphorylated by DNA damage responsive protein kinases ATM and CHEK2, leading to its nuclear accumulation and stability. Nuclear TTC5/STRAP promotes the assembly of a stress-responsive p53/TP53 coactivator complex, which includes the coactivators JMY and p300, thereby increasing p53/TP53-dependent transcription and apoptosis. Also recruits arginine methyltransferase PRMT5 to p53/TP53 when DNA is damaged, allowing PRMT5 to methylate p53/TP53. In DNA stress conditions, also prevents p53/TP53 degradation by E3 ubiquitin ligase MDM2. Upon heat-shock stress, forms a chromatin-associated complex with heat-shock factor 1 HSF1 and p300/EP300 to stimulate heat-shock-responsive transcription, thereby increasing cell survival. Mitochondrial TTC5/STRAP interacts with ATP synthase subunit beta ATP5F1B which decreased ATP synthase activity and lowers mitochondrial ATP production, thereby regulating cellular respiration and mitochondrial-dependent apoptosis. Mitochondrial TTC5/STRAP also regulates p53/TP53-mediated apoptosis. This Bos taurus (Bovine) protein is Tetratricopeptide repeat protein 5 (TTC5).